A 636-amino-acid polypeptide reads, in one-letter code: Outer spore wall assembly protein SHE10 (636 aa).

Positions 1-23 are cleaved as a signal peptide; the sequence is MRLVSKLLKALLVLLLAFGSVRY. Coiled-coil stretches lie at residues 433 to 460 and 551 to 584; these read RAHL…LFEE and KANL…TEFE. The segment at 565-607 is disordered; sequence QQREKEKAESASMKASTEFELSSSSFSSSSPSTASSCTASSTS. The span at 579-607 shows a compositional bias: low complexity; it reads ASTEFELSSSSFSSSSPSTASSCTASSTS.

The protein belongs to the SHE10 family. As to quaternary structure, component of the mitochondria-localized RNase mitochondrial RNA-processing (RNase MRP) composed of one single RNA encoded by the NME1 gene and at least 31 proteins. Absent in the nucleus-localized RNase MRP (NuMRP).

The protein resides in the mitochondrion. Involved in spore wall assembly. May be a component of the mitochondrial RNase MRP (MtMRP), a ribonucleoprotein endoribonuclease involved in the cleaving RNA transcripts to generate primers for DNA replication in mitochondria. The chain is Outer spore wall assembly protein SHE10 from Kluyveromyces lactis (strain ATCC 8585 / CBS 2359 / DSM 70799 / NBRC 1267 / NRRL Y-1140 / WM37) (Yeast).